The chain runs to 376 residues: Dual-specificity RNA methyltransferase RlmN (376 aa).

Glu-95 serves as the catalytic Proton acceptor. Residues 101–339 enclose the Radical SAM core domain; sequence EKERATLCVS…CIVRRPRGDD (239 aa). Cys-108 and Cys-344 form a disulfide bridge. 3 residues coordinate [4Fe-4S] cluster: Cys-115, Cys-119, and Cys-122. S-adenosyl-L-methionine is bound by residues 169-170, Ser-201, 223-225, and Asn-301; these read GE and SLH. The active-site S-methylcysteine intermediate is Cys-344.

This sequence belongs to the radical SAM superfamily. RlmN family. The cofactor is [4Fe-4S] cluster.

It localises to the cytoplasm. The enzyme catalyses adenosine(2503) in 23S rRNA + 2 reduced [2Fe-2S]-[ferredoxin] + 2 S-adenosyl-L-methionine = 2-methyladenosine(2503) in 23S rRNA + 5'-deoxyadenosine + L-methionine + 2 oxidized [2Fe-2S]-[ferredoxin] + S-adenosyl-L-homocysteine. It carries out the reaction adenosine(37) in tRNA + 2 reduced [2Fe-2S]-[ferredoxin] + 2 S-adenosyl-L-methionine = 2-methyladenosine(37) in tRNA + 5'-deoxyadenosine + L-methionine + 2 oxidized [2Fe-2S]-[ferredoxin] + S-adenosyl-L-homocysteine. Specifically methylates position 2 of adenine 2503 in 23S rRNA and position 2 of adenine 37 in tRNAs. m2A2503 modification seems to play a crucial role in the proofreading step occurring at the peptidyl transferase center and thus would serve to optimize ribosomal fidelity. This chain is Dual-specificity RNA methyltransferase RlmN, found in Pseudoalteromonas translucida (strain TAC 125).